The chain runs to 123 residues: Large ribosomal subunit protein uL24 (123 aa).

This sequence belongs to the universal ribosomal protein uL24 family. Part of the 50S ribosomal subunit.

One of two assembly initiator proteins, it binds directly to the 5'-end of the 23S rRNA, where it nucleates assembly of the 50S subunit. Its function is as follows. Located at the polypeptide exit tunnel on the outside of the subunit. The protein is Large ribosomal subunit protein uL24 of Methanocella arvoryzae (strain DSM 22066 / NBRC 105507 / MRE50).